We begin with the raw amino-acid sequence, 209 residues long: Shikimate kinase (209 aa).

Residue 47–52 participates in ATP binding; it reads GAGKTT. Thr51 provides a ligand contact to Mg(2+). The substrate site is built by Asp69, Arg93, and Gly115. Arg153 serves as a coordination point for ATP. Arg172 is a substrate binding site.

This sequence belongs to the shikimate kinase family. Monomer. Requires Mg(2+) as cofactor.

It localises to the cytoplasm. It carries out the reaction shikimate + ATP = 3-phosphoshikimate + ADP + H(+). Its pathway is metabolic intermediate biosynthesis; chorismate biosynthesis; chorismate from D-erythrose 4-phosphate and phosphoenolpyruvate: step 5/7. In terms of biological role, catalyzes the specific phosphorylation of the 3-hydroxyl group of shikimic acid using ATP as a cosubstrate. The polypeptide is Shikimate kinase (Bordetella avium (strain 197N)).